Consider the following 229-residue polypeptide: ATP synthase subunit a 1 (229 aa).

6 helical membrane-spanning segments follow: residues 25–45, 86–106, 111–131, 142–162, 181–201, and 202–222; these read ADAV…SFLA, VATV…PGFF, NINT…VVGI, FCGP…IGHL, LVLI…MMLM, and GVLV…IYIQ.

Belongs to the ATPase A chain family. In terms of assembly, F-type ATPases have 2 components, CF(1) - the catalytic core - and CF(0) - the membrane proton channel. CF(1) has five subunits: alpha(3), beta(3), gamma(1), delta(1), epsilon(1). CF(0) has three main subunits: a(1), b(2) and c(9-12). The alpha and beta chains form an alternating ring which encloses part of the gamma chain. CF(1) is attached to CF(0) by a central stalk formed by the gamma and epsilon chains, while a peripheral stalk is formed by the delta and b chains.

It localises to the cell inner membrane. Its function is as follows. Key component of the proton channel; it plays a direct role in the translocation of protons across the membrane. The chain is ATP synthase subunit a 1 from Pelobacter propionicus (strain DSM 2379 / NBRC 103807 / OttBd1).